A 130-amino-acid chain; its full sequence is Small ribosomal subunit protein uS11 (130 aa).

It belongs to the universal ribosomal protein uS11 family. In terms of assembly, part of the 30S ribosomal subunit. Interacts with proteins S7 and S18. Binds to IF-3.

Located on the platform of the 30S subunit, it bridges several disparate RNA helices of the 16S rRNA. Forms part of the Shine-Dalgarno cleft in the 70S ribosome. This Prochlorococcus marinus subsp. pastoris (strain CCMP1986 / NIES-2087 / MED4) protein is Small ribosomal subunit protein uS11.